Consider the following 356-residue polypeptide: DNA polymerase IV (356 aa).

In terms of domain architecture, UmuC spans 1–188 (MDTSRKIIHI…IPVTKFYGVG (188 aa)). Mg(2+) contacts are provided by Asp-11 and Asp-106. Glu-107 is a catalytic residue.

This sequence belongs to the DNA polymerase type-Y family. Monomer. The cofactor is Mg(2+).

It is found in the cytoplasm. It catalyses the reaction DNA(n) + a 2'-deoxyribonucleoside 5'-triphosphate = DNA(n+1) + diphosphate. In terms of biological role, poorly processive, error-prone DNA polymerase involved in untargeted mutagenesis. Copies undamaged DNA at stalled replication forks, which arise in vivo from mismatched or misaligned primer ends. These misaligned primers can be extended by PolIV. Exhibits no 3'-5' exonuclease (proofreading) activity. May be involved in translesional synthesis, in conjunction with the beta clamp from PolIII. This is DNA polymerase IV from Listeria monocytogenes serotype 4b (strain F2365).